The primary structure comprises 251 residues: CDP-diacylglycerol pyrophosphatase (251 aa).

Residues 4–24 traverse the membrane as a helical segment; it reads AGLLFLVMIVIAVVAAGIGYW.

It belongs to the Cdh family.

It localises to the cell inner membrane. The enzyme catalyses a CDP-1,2-diacyl-sn-glycerol + H2O = a 1,2-diacyl-sn-glycero-3-phosphate + CMP + 2 H(+). It functions in the pathway phospholipid metabolism; CDP-diacylglycerol degradation; phosphatidate from CDP-diacylglycerol: step 1/1. The polypeptide is CDP-diacylglycerol pyrophosphatase (Escherichia coli (strain K12 / MC4100 / BW2952)).